Here is a 176-residue protein sequence, read N- to C-terminus: Large ribosomal subunit protein eL20 (176 aa).

It belongs to the eukaryotic ribosomal protein eL20 family. In terms of assembly, component of the large ribosomal subunit.

Its subcellular location is the cytoplasm. Its function is as follows. Component of the large ribosomal subunit. The ribosome is a large ribonucleoprotein complex responsible for the synthesis of proteins in the cell. This is Large ribosomal subunit protein eL20 (rpl18a) from Salmo salar (Atlantic salmon).